Consider the following 271-residue polypeptide: Phosphatidylglycerol--prolipoprotein diacylglyceryl transferase (271 aa).

7 helical membrane passes run 21–41 (ISVR…MWLA), 60–80 (LLFA…VLFY), 95–115 (VWTG…AMLW), 124–144 (FFGV…VGRL), 176–196 (SQLY…NWFI), 203–223 (GSVS…VEYV), and 230–250 (LGLF…MIIG). A 1,2-diacyl-sn-glycero-3-phospho-(1'-sn-glycerol) is bound at residue Arg143.

The protein belongs to the Lgt family.

The protein localises to the cell inner membrane. The catalysed reaction is L-cysteinyl-[prolipoprotein] + a 1,2-diacyl-sn-glycero-3-phospho-(1'-sn-glycerol) = an S-1,2-diacyl-sn-glyceryl-L-cysteinyl-[prolipoprotein] + sn-glycerol 1-phosphate + H(+). It participates in protein modification; lipoprotein biosynthesis (diacylglyceryl transfer). Catalyzes the transfer of the diacylglyceryl group from phosphatidylglycerol to the sulfhydryl group of the N-terminal cysteine of a prolipoprotein, the first step in the formation of mature lipoproteins. In Vibrio vulnificus (strain CMCP6), this protein is Phosphatidylglycerol--prolipoprotein diacylglyceryl transferase.